Reading from the N-terminus, the 232-residue chain is GFP-like fluorescent chromoprotein dsFP483 (232 aa).

Positions 66–68 (QYG) form a cross-link, 2-iminomethyl-5-imidazolinone (Gln-Gly). 2,3-didehydrotyrosine is present on Tyr-67.

Belongs to the GFP family. Contains a chromophore consisting of modified amino acid residues. The chromophore is formed by autocatalytic backbone condensation between Xaa-N and Gly-(N+2), oxidation of Tyr-(N+1) to didehydrotyrosine, and formation of a double bond to the alpha-amino nitrogen of residue Xaa-N. Maturation of the chromophore requires nothing other than molecular oxygen. The precise stereochemistry of the tyrosine has not been determined. In terms of tissue distribution, oral disk.

Its function is as follows. Pigment protein that is green in color. The protein is GFP-like fluorescent chromoprotein dsFP483 of Discosoma striata (Striped mushroom).